The sequence spans 335 residues: MLRLSLLRSTATLPVKCQRRGLILPAAAMYTLGSLIFGKEARLADAMERGELHNKNVDYAKEAEERTELRIRALANTRPMEPRYNGHVPLHRYEKLLLFAISGWNSFFHPEDGYNIVQLGEATALPVFLENLKQTMLSDSSGRRILKEQPNITTEILHMDKLAKLPHNTFGYVYYQWLKRENVSPDTRAPVKFIDDPMHAYISKRYRQCHDFYHAITNMPIIIEGEITIKALEGANLGVPMAILGGILAPLRLKKVQRKRLYNIYLPWAVRTGLSCKPLINVYWEEMLEKDVTALRKELKITLPPDLRTMRKERAALRKEIDAKYNSQKRATTPA.

A mitochondrion-targeting transit peptide spans 1–10 (MLRLSLLRST). Zn(2+)-binding residues include H210, D211, H214, and E226.

This sequence belongs to the COQ4 family. As to quaternary structure, component of a multi-subunit COQ enzyme complex, composed of at least COQ3, COQ4, COQ5, COQ6, COQ7 and COQ9. Interacts with COQ3. Zn(2+) is required as a cofactor.

It localises to the mitochondrion inner membrane. It catalyses the reaction 4-hydroxy-3-methoxy-5-(all-trans-hexaprenyl)benzoate + H(+) = 2-methoxy-6-(all-trans-hexaprenyl)phenol + CO2. It participates in cofactor biosynthesis; ubiquinone biosynthesis. Lyase that catalyzes the C1-decarboxylation of 4-hydroxy-3-methoxy-5-(all-trans-hexaprenyl)benzoic acid into 2-methoxy-6-(all-trans-hexaprenyl)phenol during ubiquinone biosynthesis. The sequence is that of Ubiquinone biosynthesis protein COQ4, mitochondrial from Saccharomyces cerevisiae (strain RM11-1a) (Baker's yeast).